A 77-amino-acid polypeptide reads, in one-letter code: UPF0349 protein lmo2392 (77 aa).

This sequence belongs to the UPF0349 family.

The protein is UPF0349 protein lmo2392 of Listeria monocytogenes serovar 1/2a (strain ATCC BAA-679 / EGD-e).